The following is a 378-amino-acid chain: tRNA (guanine(26)-N(2))-dimethyltransferase (378 aa).

The region spanning lysine 4 to valine 374 is the Trm1 methyltransferase domain. Arginine 44, arginine 69, aspartate 87, aspartate 114, and alanine 115 together coordinate S-adenosyl-L-methionine. Zn(2+) is bound by residues cysteine 246, cysteine 249, cysteine 263, and cysteine 266.

The protein belongs to the class I-like SAM-binding methyltransferase superfamily. Trm1 family.

It carries out the reaction guanosine(26) in tRNA + 2 S-adenosyl-L-methionine = N(2)-dimethylguanosine(26) in tRNA + 2 S-adenosyl-L-homocysteine + 2 H(+). Functionally, dimethylates a single guanine residue at position 26 of a number of tRNAs using S-adenosyl-L-methionine as donor of the methyl groups. The sequence is that of tRNA (guanine(26)-N(2))-dimethyltransferase from Saccharolobus islandicus (strain L.S.2.15 / Lassen #1) (Sulfolobus islandicus).